The primary structure comprises 240 residues: NDR1/HIN1-like protein 2 (240 aa).

Residues 57–77 (NILIAVAVILGVAALILWLIF) traverse the membrane as a helical segment. Asn109, Asn141, Asn151, and Asn223 each carry an N-linked (GlcNAc...) asparagine glycan.

In terms of tissue distribution, expressed at low levels in roots, rosette leaves, cauline leaves, stems, flowers and siliques.

The protein resides in the cell membrane. In terms of biological role, may play a role in plant immunity. The polypeptide is NDR1/HIN1-like protein 2 (Arabidopsis thaliana (Mouse-ear cress)).